The chain runs to 346 residues: tRNA pseudouridine synthase D (346 aa).

The Nucleophile role is filled by D81. The TRUD domain occupies 157 to 303 (GVPNYFGLQR…MKHERRILRL (147 aa)).

Belongs to the pseudouridine synthase TruD family.

The enzyme catalyses uridine(13) in tRNA = pseudouridine(13) in tRNA. In terms of biological role, responsible for synthesis of pseudouridine from uracil-13 in transfer RNAs. In Stutzerimonas stutzeri (strain A1501) (Pseudomonas stutzeri), this protein is tRNA pseudouridine synthase D.